The following is a 452-amino-acid chain: Protein mab-21-like 4 (452 aa).

The chain is Protein mab-21-like 4 (Mab21l4) from Mus musculus (Mouse).